The following is a 433-amino-acid chain: Transcription factor elt-2 (433 aa).

Disordered stretches follow at residues 1–47 (MDNN…ELPR) and 194–235 (GQPP…RQGL). The segment covering 27 to 43 (PTQNMDPPEQNNESQLS) has biased composition (polar residues). Residues 211–234 (AKQSSKKSSSSNRGSNGSASRRQG) are compositionally biased toward low complexity. The GATA-type zinc finger occupies 237-261 (CSNCNGTNTTLWRRNAEGDPVCNAC). The interval 275–332 (SMKKEGALQTRKRKSKSGDSSTPSTSRARERKFERASSSTEKAQRSSNRRAGSAKADR) is disordered. Over residues 310 to 324 (ASSSTEKAQRSSNRR) the composition is skewed to polar residues.

Interacts with lag-1. Interacts with pha-4. Interacts with rpt-6. May be ubiquitinated in response to infection by B.pseudomallei. In terms of tissue distribution, expressed in the intestine.

The protein resides in the nucleus. Functionally, transcriptional activator that binds to the consensus sequence 5'-[AT]GATA[AG]-3'. Predominantly directs the transcription of intestinal genes such as ges-1, cpr-6, pho-1, ftn-1, vit-2 and lev-11, and itself. Required for gut-specific differentiation, specifically acting with the GATA region-binding transcription factor elt-7 to control normal gene expression and promote normal formation of the intestine. Regulates intestinal gene expression in response to hypoxia to promote longevity. Modulation of longevity may, in part, be the result of regulation of expression of daf-16 isoforms d and f in the intestine. Regulates tissue specific gene expression at basal levels and in response to bacterial infection in the intestine to control innate immunity. Plays a role in the induction of metal-responsive genes, activating gene expression from zinc-activated promoters and iron-dependent promoters and enhancers. May regulate the expression of genes that control sensitivity to oxidative stress, in a mab-3-dependent manner, and osmotic stress, in conjunction with the GATA region-binding transcription factor elt-3. May play a role in sphingolipid signaling by regulating the expression of the sphingosine-1-phosphate degrading enzyme, sphingosine-1-phosphate lyase. May act with the Notch signaling pathway to promote endodermal gene expression. Has a protective role in response to infection by Gram-negative bacteria such as S.enterica, E.coli, P.aeruginosa and B.pseudomallei, Gram-positive bacterium E.faecalis and fungal pathogen C.neoformans. An association with the 26S proteasome regulatory subunit rpt-6, in part, controls gene expression in response to infection by P.aeruginosa. Regulates gene expression during the recovery phase following a bacterial infection. May act with p38-activated transcription factors to control p38 gene induction in response to bacterial infection. Controls lysosome formation in the intestine by controlling lysosomal gene expression. The protein is Transcription factor elt-2 of Caenorhabditis elegans.